The primary structure comprises 487 residues: 3-octaprenyl-4-hydroxybenzoate carboxy-lyase (487 aa).

Residue Asn-172 coordinates Mn(2+). Residues 175-177 (IYR), 189-191 (RWL), and 194-195 (RG) each bind prenylated FMN. A Mn(2+)-binding site is contributed by Glu-238. Asp-287 (proton donor) is an active-site residue.

Belongs to the UbiD family. Homohexamer. The cofactor is prenylated FMN. Mn(2+) serves as cofactor.

The protein resides in the cell membrane. The catalysed reaction is a 4-hydroxy-3-(all-trans-polyprenyl)benzoate + H(+) = a 2-(all-trans-polyprenyl)phenol + CO2. It participates in cofactor biosynthesis; ubiquinone biosynthesis. In terms of biological role, catalyzes the decarboxylation of 3-octaprenyl-4-hydroxy benzoate to 2-octaprenylphenol, an intermediate step in ubiquinone biosynthesis. The sequence is that of 3-octaprenyl-4-hydroxybenzoate carboxy-lyase from Nitrosospira multiformis (strain ATCC 25196 / NCIMB 11849 / C 71).